Here is a 284-residue protein sequence, read N- to C-terminus: MTGPSGAGRSTAINVLEDLGFEAIDNLPMGLLMRLLDGPALRRPLALGLDARNRDFSTEGFLDLSKRLASLEGFQVTTLYLDCSADILLRRFSETRRRHPMSPGSSPLEGVEHELELLRPIREAADTLIDTTALNVHQLRREVERWFAPSGGSMLAISVESFSYKRGLPRGLDMVFDCRFLANPHWQPDLRAADGRDPAVAAYVHADPQYLPFFTRVTDLLQSLLPAFRSEGKAHLSVGFGCTGGQHRSVALTEAVAKALAEAGGQVSIRHREMERRKPDARPD.

An ATP-binding site is contributed by 3–10; it reads GPSGAGRS. Position 50–53 (50–53) interacts with GTP; it reads DARN.

The protein belongs to the RapZ-like family.

In terms of biological role, displays ATPase and GTPase activities. The polypeptide is Nucleotide-binding protein SPO0713 (Ruegeria pomeroyi (strain ATCC 700808 / DSM 15171 / DSS-3) (Silicibacter pomeroyi)).